The primary structure comprises 392 residues: Succinate--CoA ligase [ADP-forming] subunit beta (392 aa).

Residues 9 to 248 (KDILKKFGVS…TNEEDPFEVE (240 aa)) enclose the ATP-grasp domain. ATP-binding positions include K50, 57–59 (GRG), E103, M106, and E111. N203 and D217 together coordinate Mg(2+). Residues N268 and 325-327 (GIV) each bind substrate.

It belongs to the succinate/malate CoA ligase beta subunit family. In terms of assembly, heterotetramer of two alpha and two beta subunits. Mg(2+) serves as cofactor.

The catalysed reaction is succinate + ATP + CoA = succinyl-CoA + ADP + phosphate. It catalyses the reaction GTP + succinate + CoA = succinyl-CoA + GDP + phosphate. Its pathway is carbohydrate metabolism; tricarboxylic acid cycle; succinate from succinyl-CoA (ligase route): step 1/1. Its function is as follows. Succinyl-CoA synthetase functions in the citric acid cycle (TCA), coupling the hydrolysis of succinyl-CoA to the synthesis of either ATP or GTP and thus represents the only step of substrate-level phosphorylation in the TCA. The beta subunit provides nucleotide specificity of the enzyme and binds the substrate succinate, while the binding sites for coenzyme A and phosphate are found in the alpha subunit. This chain is Succinate--CoA ligase [ADP-forming] subunit beta, found in Chlorobium limicola (strain DSM 245 / NBRC 103803 / 6330).